The sequence spans 230 residues: Preflagellin peptidase (230 aa).

A topological domain (cytoplasmic) is located at residue Met1. Residues 2–18 traverse the membrane as a helical segment; sequence IEYIIGALGLIIASVQD. Residues 19–23 are Extracellular-facing; it reads FRSRE. The helical transmembrane segment at 24–46 threads the bilayer; the sequence is IEDYIWIFLAVFGVLFAIYSSIT. Topologically, residues 47-49 are cytoplasmic; the sequence is LLD. The chain crosses the membrane as a helical span at residues 50-72; the sequence is YSILINSISGFVICFILGYMMFL. The Extracellular segment spans residues 73-78; it reads SGIGGG. The helical transmembrane segment at 79-89 threads the bilayer; the sequence is DGKMLIGLGAL. Residues 90-110 lie on the Cytoplasmic side of the membrane; that stretch reads VPKFQMPIYTSLGTLLNLNYV. The chain crosses the membrane as a helical span at residues 111-139; the sequence is PTFPIMVFINGIFFMVFLPFVILFRNILN. Over 140 to 204 the chain is Extracellular; sequence GARPKTGKEF…EEIWVTPQIP (65 aa). A helical membrane pass occupies residues 205–216; the sequence is LIIPITLSYLVT. The Cytoplasmic segment spans residues 217–230; that stretch reads PIIGDRILDFLIPF.

It belongs to the peptidase A24 family. Archaeal preflagellin peptidase subfamily.

The protein localises to the cell membrane. The catalysed reaction is Cleaves the signal peptide of 3 to 12 amino acids from the N-terminal of preflagellin, usually at Arg-Gly-|- or Lys-Gly-|-, to release flagellin.. Its function is as follows. Cleaves the N-terminal leader peptide from preflagellins. The polypeptide is Preflagellin peptidase (flaK) (Methanococcus maripaludis (strain C6 / ATCC BAA-1332)).